Here is a 978-residue protein sequence, read N- to C-terminus: Calsyntenin-1 (978 aa).

A signal peptide spans 1-26 (MTFHKTFGYGCIVLICFELLFAGVET). Residues 27 to 876 (SSENDDEYLT…SFIHKAEGSH (850 aa)) lie on the Extracellular side of the membrane. Cadherin domains follow at residues 37-143 (QKEI…APTF) and 144-249 (LEPS…MPER). N53 carries N-linked (GlcNAc...) asparagine glycosylation. N304, N486, N608, and N823 each carry an N-linked (GlcNAc...) asparagine glycan. Residues 877–897 (VTMLIILVSVFLAVLLCGVSI) traverse the membrane as a helical segment. Residues 898 to 978 (ARLKNNQKYI…EWDNSNIFQQ (81 aa)) lie on the Cytoplasmic side of the membrane. Residues 937–958 (ADVTSDASSESENSESEDEEAL) are disordered. Positions 948 to 957 (ENSESEDEEA) are enriched in acidic residues.

It belongs to the calsyntenin family.

It localises to the postsynaptic cell membrane. Postsynaptic adhesion molecule that binds to presynaptic neurexins to mediate both excitatory and inhibitory synapse formation. Promotes synapse development by acting as a cell adhesion molecule at the postsynaptic membrane, which associates with neurexin-alpha at the presynaptic membrane. The chain is Calsyntenin-1 (Cals) from Drosophila melanogaster (Fruit fly).